The primary structure comprises 200 residues: Recombination protein RecR (200 aa).

The C4-type zinc-finger motif lies at 58 to 73 (CSVCGNLTDTDPCFIC). The Toprim domain maps to 81–176 (DLLCVVERPR…SVTRIAHGLP (96 aa)).

The protein belongs to the RecR family.

Functionally, may play a role in DNA repair. It seems to be involved in an RecBC-independent recombinational process of DNA repair. It may act with RecF and RecO. The sequence is that of Recombination protein RecR from Pelotomaculum thermopropionicum (strain DSM 13744 / JCM 10971 / SI).